The following is a 535-amino-acid chain: CTP synthase (535 aa).

Residues 1 to 267 (MTKFIFVTGG…DDIVIKKLGL (267 aa)) form an amidoligase domain region. S13 serves as a coordination point for CTP. S13 contributes to the UTP binding site. 14 to 19 (SLGKGI) contributes to the ATP binding site. Y54 provides a ligand contact to L-glutamine. D71 contributes to the ATP binding site. Residues D71 and E141 each contribute to the Mg(2+) site. CTP contacts are provided by residues 148–150 (DIE), 188–193 (KTKPTQ), and K224. UTP is bound by residues 188–193 (KTKPTQ) and K224. A Glutamine amidotransferase type-1 domain is found at 292–534 (TIGIVGKYVS…IGASLKTNKL (243 aa)). An L-glutamine-binding site is contributed by G354. The active-site Nucleophile; for glutamine hydrolysis is the C381. L-glutamine contacts are provided by residues 382–385 (LGMQ), E405, and R462. Catalysis depends on residues H507 and E509.

This sequence belongs to the CTP synthase family. Homotetramer.

The enzyme catalyses UTP + L-glutamine + ATP + H2O = CTP + L-glutamate + ADP + phosphate + 2 H(+). It carries out the reaction L-glutamine + H2O = L-glutamate + NH4(+). It catalyses the reaction UTP + NH4(+) + ATP = CTP + ADP + phosphate + 2 H(+). It functions in the pathway pyrimidine metabolism; CTP biosynthesis via de novo pathway; CTP from UDP: step 2/2. Its activity is regulated as follows. Allosterically activated by GTP, when glutamine is the substrate; GTP has no effect on the reaction when ammonia is the substrate. The allosteric effector GTP functions by stabilizing the protein conformation that binds the tetrahedral intermediate(s) formed during glutamine hydrolysis. Inhibited by the product CTP, via allosteric rather than competitive inhibition. In terms of biological role, catalyzes the ATP-dependent amination of UTP to CTP with either L-glutamine or ammonia as the source of nitrogen. Regulates intracellular CTP levels through interactions with the four ribonucleotide triphosphates. The polypeptide is CTP synthase (Carboxydothermus hydrogenoformans (strain ATCC BAA-161 / DSM 6008 / Z-2901)).